The chain runs to 268 residues: Inositol polyphosphate multikinase (268 aa).

Residues K27, E86–I88, and D99 each bind ATP. T127–I135 lines the substrate pocket. An ATP-binding site is contributed by D235.

The protein belongs to the inositol phosphokinase (IPK) family.

It localises to the cytoplasm. The protein resides in the nucleus. The catalysed reaction is 1D-myo-inositol 1,4,5-trisphosphate + 2 ATP = 1D-myo-inositol 1,3,4,5,6-pentakisphosphate + 2 ADP + 2 H(+). The enzyme catalyses 1D-myo-inositol 1,4,5-trisphosphate + ATP = 1D-myo-inositol 1,4,5,6-tetrakisphosphate + ADP + H(+). It carries out the reaction 1D-myo-inositol 1,4,5-trisphosphate + ATP = 1D-myo-inositol 1,3,4,5-tetrakisphosphate + ADP + H(+). It catalyses the reaction 1D-myo-inositol 1,4,5,6-tetrakisphosphate + ATP = 1D-myo-inositol 1,3,4,5,6-pentakisphosphate + ADP + H(+). Its function is as follows. Inositol phosphate kinase with both monophosphoinositol and diphosphoinositol polyphosphate synthase activities. Able to phosphorylate inositol 1,4,5-trisphosphate (Ins(1,4,5)P3) on both the carbon-3 and carbon-6 positions to synthesize inositol 1,3,4,5-tetrakisphosphate (Ins(1,3,4,5)P4) and inositol 1,4,5,6-tetrakisphosphate (Ins(1,4,5,6)P4), and then to subsequently phosphorylate and convert either isomer of InsP4 to inositol 1,3,4,5,6-pentakisphosphate (Ins(1,3,4,5,6)P5). Also converts (Ins(1,3,4,5,6)P5) to InsP6. Also has a role in transcription regulation. The catalytic activity is required for PHO gene repression by phosphate and for NCR gene activation in response to nitrogen availability, indicating a role for inositol pyrophosphates in these controls. Inositol polyphosphates may be involved in the regulation of chromatin remodeling of transcription. This is Inositol polyphosphate multikinase (arg82) from Schizosaccharomyces pombe (strain 972 / ATCC 24843) (Fission yeast).